The primary structure comprises 291 residues: 4-hydroxy-tetrahydrodipicolinate synthase (291 aa).

T44 serves as a coordination point for pyruvate. Residue Y132 is the Proton donor/acceptor of the active site. K160 (schiff-base intermediate with substrate) is an active-site residue. I202 contributes to the pyruvate binding site.

Belongs to the DapA family. In terms of assembly, homotetramer; dimer of dimers.

The protein resides in the cytoplasm. It carries out the reaction L-aspartate 4-semialdehyde + pyruvate = (2S,4S)-4-hydroxy-2,3,4,5-tetrahydrodipicolinate + H2O + H(+). Its pathway is amino-acid biosynthesis; L-lysine biosynthesis via DAP pathway; (S)-tetrahydrodipicolinate from L-aspartate: step 3/4. Functionally, catalyzes the condensation of (S)-aspartate-beta-semialdehyde [(S)-ASA] and pyruvate to 4-hydroxy-tetrahydrodipicolinate (HTPA). This is 4-hydroxy-tetrahydrodipicolinate synthase from Syntrophus aciditrophicus (strain SB).